A 330-amino-acid polypeptide reads, in one-letter code: Ketol-acid reductoisomerase (NADP(+)) (330 aa).

One can recognise a KARI N-terminal Rossmann domain in the interval 3–184; sequence LPVYYDKDID…GGGRMGVLET (182 aa). NADP(+)-binding positions include 26 to 29, serine 52, and serine 54; that span reads YGAQ. Residue histidine 109 is part of the active site. Position 135 (glycine 135) interacts with NADP(+). The region spanning 185 to 329 is the KARI C-terminal knotted domain; the sequence is SFKEECESDL…EILRAPFNHK (145 aa). Mg(2+)-binding residues include aspartate 193, glutamate 197, glutamate 229, and glutamate 233. A substrate-binding site is contributed by serine 254.

It belongs to the ketol-acid reductoisomerase family. Mg(2+) is required as a cofactor.

It carries out the reaction (2R)-2,3-dihydroxy-3-methylbutanoate + NADP(+) = (2S)-2-acetolactate + NADPH + H(+). The enzyme catalyses (2R,3R)-2,3-dihydroxy-3-methylpentanoate + NADP(+) = (S)-2-ethyl-2-hydroxy-3-oxobutanoate + NADPH + H(+). The protein operates within amino-acid biosynthesis; L-isoleucine biosynthesis; L-isoleucine from 2-oxobutanoate: step 2/4. Its pathway is amino-acid biosynthesis; L-valine biosynthesis; L-valine from pyruvate: step 2/4. Its function is as follows. Involved in the biosynthesis of branched-chain amino acids (BCAA). Catalyzes an alkyl-migration followed by a ketol-acid reduction of (S)-2-acetolactate (S2AL) to yield (R)-2,3-dihydroxy-isovalerate. In the isomerase reaction, S2AL is rearranged via a Mg-dependent methyl migration to produce 3-hydroxy-3-methyl-2-ketobutyrate (HMKB). In the reductase reaction, this 2-ketoacid undergoes a metal-dependent reduction by NADPH to yield (R)-2,3-dihydroxy-isovalerate. The sequence is that of Ketol-acid reductoisomerase (NADP(+)) from Helicobacter pylori (strain ATCC 700392 / 26695) (Campylobacter pylori).